A 400-amino-acid polypeptide reads, in one-letter code: Methylthioribose kinase (400 aa).

ATP is bound by residues Asn40, Lys57, and 111-113 (EDL). Asp229 is a substrate binding site. Residue 246-248 (DAE) coordinates ATP. Arg344 contacts substrate.

It belongs to the methylthioribose kinase family. As to quaternary structure, homodimer.

It catalyses the reaction 5-(methylsulfanyl)-D-ribose + ATP = 5-(methylsulfanyl)-alpha-D-ribose 1-phosphate + ADP + H(+). The protein operates within amino-acid biosynthesis; L-methionine biosynthesis via salvage pathway; S-methyl-5-thio-alpha-D-ribose 1-phosphate from S-methyl-5'-thioadenosine (hydrolase route): step 2/2. In terms of biological role, catalyzes the phosphorylation of methylthioribose into methylthioribose-1-phosphate. The protein is Methylthioribose kinase of Pectobacterium carotovorum subsp. carotovorum (strain PC1).